Here is a 227-residue protein sequence, read N- to C-terminus: MKVSYHGHSVVKIETNGKVIVIDPFLTGNPKTDLKAEDVKVDAILLSHGHGDHVGDTVELAKKNNAVVVAPFELATFLSWQGVKTHPMHIGGSHEFDFGKVKFTQAFHGSSYIDEENKTITYTGMPAGILFTAEEKTVYHAGDTALFSDMKLIGELNNVDVAFLPIGDNFTMGPEDAVLAAKWVQAKTVVPMHYNTFPVIEQDPYQFVEKLQNCTGKVLEAGESITL.

The protein belongs to the UPF0173 family.

The chain is UPF0173 metal-dependent hydrolase BCAH187_A4741 from Bacillus cereus (strain AH187).